The chain runs to 103 residues: Toxin BMLCL (103 aa).

An N-terminal signal peptide occupies residues M1–T21. 5 disulfides stabilise this stretch: C24–C45, C27–C37, C38–C72, C76–C90, and C91–C96.

It belongs to the three-finger toxin family. Ancestral subfamily. Orphan group XVII sub-subfamily. Expressed by the venom gland.

It localises to the secreted. Its function is as follows. Interacts with high efficiency with both neuronal alpha-7/CHRNA7 and muscle type nicotinic acetylcholine receptors (nAChRs). Tested on human alpha-7/CHRNA7 nAChR (IC(50)=42 nM), T.californica muscle receptor (IC(50)=31 nM), L.stagnalis and A.californica acetylcholine-binding proteins (IC(50)=333 nM and 3.4 uM, respectively). The chain is Toxin BMLCL from Bungarus multicinctus (Many-banded krait).